Here is a 177-residue protein sequence, read N- to C-terminus: MPVKRSLKLDGLLEENSFDPSKITRKKSVITYSPTTGTCQMSLFASPTSSEEQKHRNGLSNEKRKKLNHPSLTESKESTTKDNDEFMMLLSKVEKLSEEIMEIMQNLSSIQALEGSRELENLIGISCASHFLKREMQKTKELMTKVNKQKLFEKSTGLPHKASRHLDSYEFLKAILN.

A Glycyl lysine isopeptide (Lys-Gly) (interchain with G-Cter in SUMO2) cross-link involves residue Lys-8. The short motif at 9 to 13 (LDGLL) is the LXXLL motif element. Ser-17 carries the post-translational modification Phosphoserine. Residues 20–50 (PSKITRKKSVITYSPTTGTCQMSLFASPTSS) form a DD1 region. Lys-22 is covalently cross-linked (Glycyl lysine isopeptide (Lys-Gly) (interchain with G-Cter in SUMO2)). Residue Ser-28 is modified to Phosphoserine. The span at 41–50 (MSLFASPTSS) shows a compositional bias: polar residues. The segment at 41-81 (MSLFASPTSSEEQKHRNGLSNEKRKKLNHPSLTESKESTTK) is disordered. Residues 63-66 (KRKK) carry the Nuclear localization signal motif. The residue at position 71 (Ser-71) is a Phosphoserine. A coiled-coil region spans residues 83 to 113 (NDEFMMLLSKVEKLSEEIMEIMQNLSSIQAL). The LXXIL motif motif lies at 172–176 (LKAIL).

In terms of assembly, homodimer; mediated by the coiled coil domain. Isoform 3, but not other isoforms, interacts with the cytoplasmic tail of integrin ITGB3. The relevance of the interaction with ITGB3 is however uncertain, since isoform 3 is mainly nuclear. Interacts with CCNA2 and MTA1. Interacts with NFKB1 NF-kappa-B subunit. Component of the CENPA-CAD complex, composed of CENPI, CENPK, CENPL, CENPO, CENPP, CENPQ, CENPR and CENPS. The CENPA-CAD complex interacts with the CENPA-NAC complex, at least composed of CENPA, CENPC, CENPH, CENPM, CENPN, CENPT and CENPU. Interacts with TASOR. Widely expressed. Expressed in spleen, thymus, prostate, ovary, small intestine and white blood cells. Highly expressed in testis and colon. Isoform 4 is expressed in platelets, lymphocytes and granulocytes.

The protein resides in the nucleus. It localises to the chromosome. The protein localises to the centromere. Its subcellular location is the kinetochore. It is found in the cytoplasm. Functionally, transcription coregulator that can have both coactivator and corepressor functions. Isoform 1, but not other isoforms, is involved in the coactivation of nuclear receptors for retinoid X (RXRs) and thyroid hormone (TRs) in a ligand-dependent fashion. In contrast, it does not coactivate nuclear receptors for retinoic acid, vitamin D, progesterone receptor, nor glucocorticoid. Acts as a coactivator for estrogen receptor alpha. Acts as a transcriptional corepressor via its interaction with the NFKB1 NF-kappa-B subunit, possibly by interfering with the transactivation domain of NFKB1. Induces apoptosis in breast cancer cells, but not in other cancer cells, via a caspase-2 mediated pathway that involves mitochondrial membrane permeabilization but does not require other caspases. May also act as an inhibitor of cyclin A-associated kinase. Also acts a component of the CENPA-CAD (nucleosome distal) complex, a complex recruited to centromeres which is involved in assembly of kinetochore proteins, mitotic progression and chromosome segregation. May be involved in incorporation of newly synthesized CENPA into centromeres via its interaction with the CENPA-NAC complex. The chain is Centromere protein R (ITGB3BP) from Homo sapiens (Human).